Consider the following 334-residue polypeptide: Holliday junction branch migration complex subunit RuvB (334 aa).

The tract at residues 4–184 (ADRLIQPQDL…FGIPLRLEFY (181 aa)) is large ATPase domain (RuvB-L). ATP is bound by residues Arg24, Gly65, Lys68, Thr69, Thr70, 131–133 (EDY), Arg174, Tyr184, and Arg221. Thr69 contributes to the Mg(2+) binding site. The small ATPAse domain (RuvB-S) stretch occupies residues 185 to 255 (NVRDLSSIVA…VAQSALDLLD (71 aa)). Residues 258-334 (SEGFDYMDRK…YSHFDLIKPD (77 aa)) are head domain (RuvB-H). Arg294, Arg313, and Arg318 together coordinate DNA.

Belongs to the RuvB family. Homohexamer. Forms an RuvA(8)-RuvB(12)-Holliday junction (HJ) complex. HJ DNA is sandwiched between 2 RuvA tetramers; dsDNA enters through RuvA and exits via RuvB. An RuvB hexamer assembles on each DNA strand where it exits the tetramer. Each RuvB hexamer is contacted by two RuvA subunits (via domain III) on 2 adjacent RuvB subunits; this complex drives branch migration. In the full resolvosome a probable DNA-RuvA(4)-RuvB(12)-RuvC(2) complex forms which resolves the HJ.

It is found in the cytoplasm. It catalyses the reaction ATP + H2O = ADP + phosphate + H(+). In terms of biological role, the RuvA-RuvB-RuvC complex processes Holliday junction (HJ) DNA during genetic recombination and DNA repair, while the RuvA-RuvB complex plays an important role in the rescue of blocked DNA replication forks via replication fork reversal (RFR). RuvA specifically binds to HJ cruciform DNA, conferring on it an open structure. The RuvB hexamer acts as an ATP-dependent pump, pulling dsDNA into and through the RuvAB complex. RuvB forms 2 homohexamers on either side of HJ DNA bound by 1 or 2 RuvA tetramers; 4 subunits per hexamer contact DNA at a time. Coordinated motions by a converter formed by DNA-disengaged RuvB subunits stimulates ATP hydrolysis and nucleotide exchange. Immobilization of the converter enables RuvB to convert the ATP-contained energy into a lever motion, pulling 2 nucleotides of DNA out of the RuvA tetramer per ATP hydrolyzed, thus driving DNA branch migration. The RuvB motors rotate together with the DNA substrate, which together with the progressing nucleotide cycle form the mechanistic basis for DNA recombination by continuous HJ branch migration. Branch migration allows RuvC to scan DNA until it finds its consensus sequence, where it cleaves and resolves cruciform DNA. The protein is Holliday junction branch migration complex subunit RuvB of Shewanella amazonensis (strain ATCC BAA-1098 / SB2B).